Here is a 434-residue protein sequence, read N- to C-terminus: Methylenetetrahydrofolate--tRNA-(uracil-5-)-methyltransferase TrmFO (434 aa).

Residue 8-13 (GAGLAG) coordinates FAD.

This sequence belongs to the MnmG family. TrmFO subfamily. FAD is required as a cofactor.

It is found in the cytoplasm. The catalysed reaction is uridine(54) in tRNA + (6R)-5,10-methylene-5,6,7,8-tetrahydrofolate + NADH + H(+) = 5-methyluridine(54) in tRNA + (6S)-5,6,7,8-tetrahydrofolate + NAD(+). The enzyme catalyses uridine(54) in tRNA + (6R)-5,10-methylene-5,6,7,8-tetrahydrofolate + NADPH + H(+) = 5-methyluridine(54) in tRNA + (6S)-5,6,7,8-tetrahydrofolate + NADP(+). In terms of biological role, catalyzes the folate-dependent formation of 5-methyl-uridine at position 54 (M-5-U54) in all tRNAs. The sequence is that of Methylenetetrahydrofolate--tRNA-(uracil-5-)-methyltransferase TrmFO from Exiguobacterium sibiricum (strain DSM 17290 / CCUG 55495 / CIP 109462 / JCM 13490 / 255-15).